Reading from the N-terminus, the 181-residue chain is Der GTPase-activating protein YihI (181 aa).

2 disordered regions span residues Met1–Pro75 and Glu145–Gly181. Residues Arg32–Leu43 are compositionally biased toward basic residues. Over residues Pro146–Glu155 the composition is skewed to acidic residues. The segment covering Ala156 to Asp165 has biased composition (basic and acidic residues). Residues Asp166–Gly181 are compositionally biased toward acidic residues.

Belongs to the YihI family. As to quaternary structure, interacts with Der.

Its function is as follows. A GTPase-activating protein (GAP) that modifies Der/EngA GTPase function. May play a role in ribosome biogenesis. The protein is Der GTPase-activating protein YihI of Vibrio vulnificus (strain CMCP6).